We begin with the raw amino-acid sequence, 320 residues long: UDP-N-acetylenolpyruvoylglucosamine reductase (320 aa).

The region spanning 34 to 200 (RAGGLAEVFF…TSAVFEGFAE (167 aa)) is the FAD-binding PCMH-type domain. R180 is a catalytic residue. S229 acts as the Proton donor in catalysis. E299 is an active-site residue.

It belongs to the MurB family. FAD is required as a cofactor.

Its subcellular location is the cytoplasm. It catalyses the reaction UDP-N-acetyl-alpha-D-muramate + NADP(+) = UDP-N-acetyl-3-O-(1-carboxyvinyl)-alpha-D-glucosamine + NADPH + H(+). Its pathway is cell wall biogenesis; peptidoglycan biosynthesis. Cell wall formation. The chain is UDP-N-acetylenolpyruvoylglucosamine reductase from Mesorhizobium japonicum (strain LMG 29417 / CECT 9101 / MAFF 303099) (Mesorhizobium loti (strain MAFF 303099)).